A 72-amino-acid polypeptide reads, in one-letter code: UPF0270 protein YheU (72 aa).

Belongs to the UPF0270 family.

The chain is UPF0270 protein YheU from Salmonella arizonae (strain ATCC BAA-731 / CDC346-86 / RSK2980).